The chain runs to 335 residues: Proline racemase (335 aa).

Cysteine 91 serves as the catalytic Proton acceptor. Cysteine 256 functions as the Proton donor in the catalytic mechanism.

The protein belongs to the proline racemase family.

It catalyses the reaction L-proline = D-proline. Its activity is regulated as follows. Inhibited by pyrrole-2-carboxylate in vitro. Functionally, catalyzes the reversible interconversion of L- and D-proline. Likely functions as the proline racemase necessary for D-proline generation in order to discriminate it from the L-proline used for protein synthesis. The protein is Proline racemase of Acetoanaerobium sticklandii (strain ATCC 12662 / DSM 519 / JCM 1433 / CCUG 9281 / NCIMB 10654 / HF) (Clostridium sticklandii).